Reading from the N-terminus, the 236-residue chain is Purine nucleoside phosphorylase DeoD-type 2 (236 aa).

H5 is an a purine D-ribonucleoside binding site. Phosphate is bound by residues G21, R25, R44, and 88–91 (RIGS). Residues 180–182 (DME) and 204–205 (SD) contribute to the a purine D-ribonucleoside site. D205 (proton donor) is an active-site residue.

The protein belongs to the PNP/UDP phosphorylase family. Homohexamer; trimer of homodimers.

It catalyses the reaction a purine D-ribonucleoside + phosphate = a purine nucleobase + alpha-D-ribose 1-phosphate. It carries out the reaction a purine 2'-deoxy-D-ribonucleoside + phosphate = a purine nucleobase + 2-deoxy-alpha-D-ribose 1-phosphate. Its function is as follows. Catalyzes the reversible phosphorolytic breakdown of the N-glycosidic bond in the beta-(deoxy)ribonucleoside molecules, with the formation of the corresponding free purine bases and pentose-1-phosphate. The protein is Purine nucleoside phosphorylase DeoD-type 2 of Vibrio cholerae serotype O1 (strain ATCC 39315 / El Tor Inaba N16961).